The following is a 256-amino-acid chain: Thiazole synthase (256 aa).

The active-site Schiff-base intermediate with DXP is the lysine 95. 1-deoxy-D-xylulose 5-phosphate is bound by residues glycine 156, 182-183, and 204-205; these read AG and NT.

It belongs to the ThiG family. As to quaternary structure, homotetramer. Forms heterodimers with either ThiH or ThiS.

Its subcellular location is the cytoplasm. The enzyme catalyses [ThiS sulfur-carrier protein]-C-terminal-Gly-aminoethanethioate + 2-iminoacetate + 1-deoxy-D-xylulose 5-phosphate = [ThiS sulfur-carrier protein]-C-terminal Gly-Gly + 2-[(2R,5Z)-2-carboxy-4-methylthiazol-5(2H)-ylidene]ethyl phosphate + 2 H2O + H(+). Its pathway is cofactor biosynthesis; thiamine diphosphate biosynthesis. In terms of biological role, catalyzes the rearrangement of 1-deoxy-D-xylulose 5-phosphate (DXP) to produce the thiazole phosphate moiety of thiamine. Sulfur is provided by the thiocarboxylate moiety of the carrier protein ThiS. In vitro, sulfur can be provided by H(2)S. The polypeptide is Thiazole synthase (Escherichia coli O7:K1 (strain IAI39 / ExPEC)).